A 130-amino-acid polypeptide reads, in one-letter code: Small ribosomal subunit protein uS11c (130 aa).

It belongs to the universal ribosomal protein uS11 family. Part of the 30S ribosomal subunit.

Its subcellular location is the plastid. The protein localises to the chloroplast. The sequence is that of Small ribosomal subunit protein uS11c from Spirogyra maxima (Green alga).